The sequence spans 284 residues: Four and a half LIM domains protein 5 (284 aa).

The C4-type zinc finger occupies 8 to 32 (CQYCTASLLGKKYVLKDDSPYCVTC). LIM zinc-binding domains lie at 39–100 (NYCE…ECSS), 101–160 (KCFH…KEFA), 161–220 (HYCN…LYAN), and 223–283 (VACS…MDTD).

Interacts with CREM (via the third LIM domain). Interacts (via second LIM domain) with SPAG8. As to expression, testis-specific (at protein level).

It localises to the nucleus. In terms of biological role, may be involved in the regulation of spermatogenesis. Stimulates CREM transcriptional activity in a phosphorylation-independent manner. The chain is Four and a half LIM domains protein 5 (FHL5) from Homo sapiens (Human).